The chain runs to 26 residues: Unknown protein 16 (26 aa).

Residues 1–26 (AINSESGVRSVVPQPCNALPNQGPEK) are disordered.

The chain is Unknown protein 16 from Pseudotsuga menziesii (Douglas-fir).